The sequence spans 334 residues: F420-dependent glucose-6-phosphate dehydrogenase (334 aa).

Aspartate 38 contributes to the coenzyme F420-(gamma-Glu)n binding site. Residue histidine 39 is the Proton donor of the active site. Residues threonine 75 and 106 to 107 each bind coenzyme F420-(gamma-Glu)n; that span reads TG. Glutamate 108 functions as the Proton acceptor in the catalytic mechanism. Coenzyme F420-(gamma-Glu)n is bound by residues asparagine 111, 175-176, and 178-179; these read GG and LV. Substrate contacts are provided by threonine 193, lysine 196, lysine 257, and arginine 281.

Belongs to the F420-dependent glucose-6-phosphate dehydrogenase family. As to quaternary structure, homodimer.

It catalyses the reaction oxidized coenzyme F420-(gamma-L-Glu)(n) + D-glucose 6-phosphate + H(+) = 6-phospho-D-glucono-1,5-lactone + reduced coenzyme F420-(gamma-L-Glu)(n). Its function is as follows. Catalyzes the coenzyme F420-dependent oxidation of glucose 6-phosphate (G6P) to 6-phosphogluconolactone. This chain is F420-dependent glucose-6-phosphate dehydrogenase, found in Kribbella flavida (strain DSM 17836 / JCM 10339 / NBRC 14399).